A 70-amino-acid polypeptide reads, in one-letter code: Large ribosomal subunit protein bL32c (70 aa).

Disordered regions lie at residues 1-20 and 51-70; these read MAVP…KNVR and NDDS…LDDP. Residues 52 to 61 show a composition bias toward polar residues; sequence DDSSGSSESK.

The protein belongs to the bacterial ribosomal protein bL32 family.

The protein localises to the plastid. The protein resides in the chloroplast. This Pinus thunbergii (Japanese black pine) protein is Large ribosomal subunit protein bL32c (rpl32).